Reading from the N-terminus, the 241-residue chain is Chloride intracellular channel protein 1 (241 aa).

At Ala2 the chain carries N-acetylalanine. A required for insertion into the membrane region spans residues 2-90; sequence AEEQPQVELF…EEFLEAVLCP (89 aa). Residue Lys13 is modified to N6-acetyllysine. A G-site motif is present at residues 24 to 27; the sequence is CPFS. A disulfide bond links Cys24 and Cys59. The helical transmembrane segment at 26–46 threads the bilayer; sequence FSQRLFMVLWLKGVTFNVTTV. A GST C-terminal domain is found at 93–233; it reads YPKLAALNPE…PDDEEIELAY (141 aa). Residue Lys119 is modified to N6-acetyllysine. Ser121 carries the phosphoserine modification. An N6-acetyllysine modification is found at Lys131. A phosphoserine mark is found at Ser156 and Ser211. At Tyr233 the chain carries Phosphotyrosine.

This sequence belongs to the chloride channel CLIC family. In terms of assembly, monomer. Homodimer (in vitro). Interacts with TRAPPC2. Dimerization requires a conformation change that leads to the exposure of a large hydrophobic surface. In vivo, this may lead to membrane insertion.

It is found in the nucleus. The protein resides in the nucleus membrane. It localises to the cytoplasm. Its subcellular location is the cell membrane. The protein localises to the endoplasmic reticulum. The catalysed reaction is L-dehydroascorbate + 2 glutathione = glutathione disulfide + L-ascorbate. The enzyme catalyses chloride(in) = chloride(out). It catalyses the reaction iodide(out) = iodide(in). It carries out the reaction thiocyanate(in) = thiocyanate(out). The catalysed reaction is nitrate(in) = nitrate(out). The enzyme catalyses bromide(in) = bromide(out). It catalyses the reaction fluoride(in) = fluoride(out). In the soluble state, catalyzes glutaredoxin-like thiol disulfide exchange reactions with reduced glutathione as electron donor. Reduces selenite and dehydroascorbate and may act as an antioxidant during oxidative stress response. Can insert into membranes and form voltage-dependent multi-ion conductive channels. Membrane insertion seems to be redox-regulated and may occur only under oxidizing conditions. Involved in regulation of the cell cycle. The chain is Chloride intracellular channel protein 1 (CLIC1) from Oryctolagus cuniculus (Rabbit).